A 65-amino-acid polypeptide reads, in one-letter code: Light-harvesting protein B800/830/1020 beta-2 chain (65 aa).

Topologically, residues 1 to 17 (TDIRTGLTDEECQEIHE) are cytoplasmic. Residues His-16 and Asn-34 each contribute to the a bacteriochlorophyll site. Residues 18-40 (MNMLGMHAYWSIGLIANALAYAW) traverse the membrane as a helical segment. The Periplasmic portion of the chain corresponds to 41-65 (RPFHQGRAGNRLEDHAPDYVRSALT).

The protein belongs to the antenna complex beta subunit family. In terms of assembly, the core complex is formed by different alpha and beta chains, binding bacteriochlorophyll molecules, and arranged most probably in tetrameric structures disposed around the reaction center. The non-pigmented gamma chains may constitute additional components.

The protein localises to the cell inner membrane. Its function is as follows. Antenna complexes are light-harvesting systems, which transfer the excitation energy to the reaction centers. The polypeptide is Light-harvesting protein B800/830/1020 beta-2 chain (Halorhodospira halochloris (Ectothiorhodospira halochloris)).